We begin with the raw amino-acid sequence, 183 residues long: MSGFISSTAAQGPPSPAIESYLFGCELSSKTKQYTFEVNEEDDAVHLVCLQTISLGAGAKDEHNVVEVTAPNYQNKEVTVPLANLKLSCQPMVNVGYFEIEAPVTFRLTSGSGPVFISGRHYVVASDDEDLSGSEEEMEDEEEEEDDDDDDDDDDDDDDDDDEEEITPIKPAKKPLKTLSRTF.

A compositionally biased stretch (acidic residues) spans Ser-126–Ile-166. The segment at Ser-126–Phe-183 is disordered.

Belongs to the nucleoplasmin family.

Its subcellular location is the nucleus. The protein resides in the nucleolus. The protein is Nucleoplasmin-like protein NO29 of Xenopus laevis (African clawed frog).